The chain runs to 360 residues: MFVARSIAADHKDLIHDVSFDFHGRRMATCSSDQSVKVWDKSESGEWHCTASWKTHSGSVWRVTWAHPEFGQVLASCSFDRTAAVWEEIVGESNDKLRGQSHWVKRTTLVDSRTSVTDVKFAPKHMGLMLATCSADGIVRIYEAPDVMNLSQWSLQHEISCKLSCSCISWNPSSSRAHAPMIAVGSDDSSPNAMAKVQIFEYNENTRKYAKAETLLTVTDPVHDIAFAPNLGRSFHILAIATKDVRIFTLKPVRKELTSSGGPTKFEIHIVAQFDNHNSQVWRVSWNITGTVLASSGDDGCVRLWKANYMDNWKCTGILKGNGSPVNGSSQQGNSNPSVGSNIPSLQNSLNGSSAGRKHS.

6 WD repeats span residues 10–49 (DHKDLIHDVSFDFHGRRMATCSSDQSVKVWDKSESGEWHC), 55–96 (THSG…SNDK), 111–152 (DSRT…NLSQ), 160–210 (SCKL…RKYA), 217–258 (TVTD…KELT), and 276–315 (NHNSQVWRVSWNITGTVLASSGDDGCVRLWKANYMDNWKC). K12 is covalently cross-linked (Glycyl lysine isopeptide (Lys-Gly) (interchain with G-Cter in SUMO2)). A Phosphoserine modification is found at S190. Over residues 324–342 (SPVNGSSQQGNSNPSVGSN) the composition is skewed to low complexity. The disordered stretch occupies residues 324 to 360 (SPVNGSSQQGNSNPSVGSNIPSLQNSLNGSSAGRKHS). Residues 343 to 354 (IPSLQNSLNGSS) show a composition bias toward polar residues.

This sequence belongs to the WD repeat SEC13 family. Component of the Nup107-160 subcomplex of the nuclear pore complex (NPC). The Nup107-160 subcomplex includes NUP160, NUP133, NUP107, NUP98, NUP85, NUP43, NUP37, SEH1 and SEC13. The SEH1 subunit appears to be only weakly associated with the Nup107-160 subcomplex. Component of the GATOR2 subcomplex, composed of MIOS, SEC13, SEH1L, WDR24 and WDR59. The GATOR2 complex interacts with CASTOR1 and CASTOR2; the interaction is negatively regulated by arginine. The GATOR2 complex interacts with SESN1, SESN2 and SESN3; the interaction is negatively regulated by amino acids. SESN1, SESN2 and SESN3 convey leucine availability via direct interaction with SEH1L and WDR24.

It is found in the chromosome. It localises to the centromere. The protein localises to the kinetochore. The protein resides in the nucleus. Its subcellular location is the nuclear pore complex. It is found in the lysosome membrane. The GATOR2 complex is negatively regulated by the upstream amino acid sensors CASTOR1 and SESN2, which sequester the GATOR2 complex in absence of amino acids. In the presence of abundant amino acids, GATOR2 is released from CASTOR1 and SESN2 and activated. In terms of biological role, component of the Nup107-160 subcomplex of the nuclear pore complex (NPC). The Nup107-160 subcomplex is required for the assembly of a functional NPC. The Nup107-160 subcomplex is also required for normal kinetochore microtubule attachment, mitotic progression and chromosome segregation. This subunit plays a role in recruitment of the Nup107-160 subcomplex to the kinetochore. As a component of the GATOR2 complex, functions as an activator of the amino acid-sensing branch of the mTORC1 signaling pathway. The GATOR2 complex indirectly activates mTORC1 through the inhibition of the GATOR1 subcomplex. GATOR2 probably acts as an E3 ubiquitin-protein ligase toward GATOR1. In the presence of abundant amino acids, the GATOR2 complex mediates ubiquitination of the NPRL2 core component of the GATOR1 complex, leading to GATOR1 inactivation. In the absence of amino acids, GATOR2 is inhibited, activating the GATOR1 complex. Within the GATOR2 complex, SEC13 and SEH1L are required to stabilize the complex. This Bos taurus (Bovine) protein is Nucleoporin SEH1 (SEH1L).